Here is a 156-residue protein sequence, read N- to C-terminus: Small ribosomal subunit protein uS7 (156 aa).

Belongs to the universal ribosomal protein uS7 family. In terms of assembly, part of the 30S ribosomal subunit. Contacts proteins S9 and S11.

One of the primary rRNA binding proteins, it binds directly to 16S rRNA where it nucleates assembly of the head domain of the 30S subunit. Is located at the subunit interface close to the decoding center, probably blocks exit of the E-site tRNA. The polypeptide is Small ribosomal subunit protein uS7 (Streptomyces griseus subsp. griseus (strain JCM 4626 / CBS 651.72 / NBRC 13350 / KCC S-0626 / ISP 5235)).